Consider the following 357-residue polypeptide: 3-dehydroquinate synthase (357 aa).

NAD(+)-binding positions include Gly-104–Asp-108, Thr-128–Thr-129, Lys-141, and Phe-168–Thr-171. Zn(2+)-binding residues include Glu-183, His-243, and His-260.

Belongs to the sugar phosphate cyclases superfamily. Dehydroquinate synthase family. The cofactor is NAD(+). It depends on Co(2+) as a cofactor. Requires Zn(2+) as cofactor.

The protein resides in the cytoplasm. It carries out the reaction 7-phospho-2-dehydro-3-deoxy-D-arabino-heptonate = 3-dehydroquinate + phosphate. Its pathway is metabolic intermediate biosynthesis; chorismate biosynthesis; chorismate from D-erythrose 4-phosphate and phosphoenolpyruvate: step 2/7. Its function is as follows. Catalyzes the conversion of 3-deoxy-D-arabino-heptulosonate 7-phosphate (DAHP) to dehydroquinate (DHQ). The protein is 3-dehydroquinate synthase of Streptococcus pyogenes serotype M18 (strain MGAS8232).